The sequence spans 245 residues: Carboxy-S-adenosyl-L-methionine synthase (245 aa).

Residues Tyr42, 67-69 (GCS), 92-93 (DN), 120-121 (DI), Asn135, and Arg202 each bind S-adenosyl-L-methionine.

Belongs to the class I-like SAM-binding methyltransferase superfamily. Cx-SAM synthase family. As to quaternary structure, homodimer.

It carries out the reaction prephenate + S-adenosyl-L-methionine = carboxy-S-adenosyl-L-methionine + 3-phenylpyruvate + H2O. Functionally, catalyzes the conversion of S-adenosyl-L-methionine (SAM) to carboxy-S-adenosyl-L-methionine (Cx-SAM). This Vibrio parahaemolyticus serotype O3:K6 (strain RIMD 2210633) protein is Carboxy-S-adenosyl-L-methionine synthase.